The following is a 176-amino-acid chain: NAD(P)H-quinone oxidoreductase subunit I, chloroplastic (176 aa).

4Fe-4S ferredoxin-type domains follow at residues 55–84 (GRIH…VDWE) and 95–124 (LNYS…MTEE). [4Fe-4S] cluster contacts are provided by Cys-64, Cys-67, Cys-70, Cys-74, Cys-104, Cys-107, Cys-110, and Cys-114.

Belongs to the complex I 23 kDa subunit family. In terms of assembly, NDH is composed of at least 16 different subunits, 5 of which are encoded in the nucleus. Requires [4Fe-4S] cluster as cofactor.

The protein localises to the plastid. It localises to the chloroplast thylakoid membrane. It carries out the reaction a plastoquinone + NADH + (n+1) H(+)(in) = a plastoquinol + NAD(+) + n H(+)(out). It catalyses the reaction a plastoquinone + NADPH + (n+1) H(+)(in) = a plastoquinol + NADP(+) + n H(+)(out). Functionally, NDH shuttles electrons from NAD(P)H:plastoquinone, via FMN and iron-sulfur (Fe-S) centers, to quinones in the photosynthetic chain and possibly in a chloroplast respiratory chain. The immediate electron acceptor for the enzyme in this species is believed to be plastoquinone. Couples the redox reaction to proton translocation, and thus conserves the redox energy in a proton gradient. The polypeptide is NAD(P)H-quinone oxidoreductase subunit I, chloroplastic (Populus alba (White poplar)).